The sequence spans 156 residues: Ribosomal RNA large subunit methyltransferase H (156 aa).

S-adenosyl-L-methionine-binding positions include Leu-73, Gly-104, and 123–128; that span reads LSPLTM.

Belongs to the RNA methyltransferase RlmH family. In terms of assembly, homodimer.

The protein localises to the cytoplasm. It carries out the reaction pseudouridine(1915) in 23S rRNA + S-adenosyl-L-methionine = N(3)-methylpseudouridine(1915) in 23S rRNA + S-adenosyl-L-homocysteine + H(+). Specifically methylates the pseudouridine at position 1915 (m3Psi1915) in 23S rRNA. This Proteus mirabilis (strain HI4320) protein is Ribosomal RNA large subunit methyltransferase H.